A 91-amino-acid chain; its full sequence is UPF0298 protein OB1449 (91 aa).

It belongs to the UPF0298 family.

The protein localises to the cytoplasm. This Oceanobacillus iheyensis (strain DSM 14371 / CIP 107618 / JCM 11309 / KCTC 3954 / HTE831) protein is UPF0298 protein OB1449.